Here is a 404-residue protein sequence, read N- to C-terminus: uncharacterized protein (404 aa).

Helical transmembrane passes span 15 to 35 (WSLLMGAAFLMATSAIGPGFL), 43 to 63 (NTLAASFGFVILISIILDIFA), 84 to 104 (MVLPGLGYFIAILVVLGGLAF), 121 to 141 (GITPETGALISAVIAILIFVI), 154 to 174 (IAGFVMIILTVYVAATTAPPV), 187 to 207 (ISIFAIVTLVGGTVGGYITFA), 231 to 251 (VVGILITSVMRIALFLAVLGV), 279 to 299 (IFGLIMWSAAITSVIGAAYTS), 316 to 336 (GIIIGFIVVSTLAFVTIGQPA), 338 to 358 (ILVLVGSLNGLILPIALGTLL), and 373 to 393 (PLWLTSTGALVVIVMAVMGIY).

Belongs to the NRAMP family.

It is found in the cell membrane. This is an uncharacterized protein from Bacillus subtilis (strain 168).